The following is a 454-amino-acid chain: Tubulin beta-3 chain (454 aa).

Q11, E75, S144, G148, T149, G150, N210, and N232 together coordinate GTP. E75 serves as a coordination point for Mg(2+). The segment at T435–I454 is disordered.

Belongs to the tubulin family. As to quaternary structure, dimer of alpha and beta chains. A typical microtubule is a hollow water-filled tube with an outer diameter of 25 nm and an inner diameter of 15 nM. Alpha-beta heterodimers associate head-to-tail to form protofilaments running lengthwise along the microtubule wall with the beta-tubulin subunit facing the microtubule plus end conferring a structural polarity. Microtubules usually have 13 protofilaments but different protofilament numbers can be found in some organisms and specialized cells. Requires Mg(2+) as cofactor.

The protein resides in the cytoplasm. Its subcellular location is the cytoskeleton. In terms of biological role, tubulin is the major constituent of microtubules, a cylinder consisting of laterally associated linear protofilaments composed of alpha- and beta-tubulin heterodimers. Microtubules grow by the addition of GTP-tubulin dimers to the microtubule end, where a stabilizing cap forms. Below the cap, tubulin dimers are in GDP-bound state, owing to GTPase activity of alpha-tubulin. The protein is Tubulin beta-3 chain (betaTub60D) of Drosophila melanogaster (Fruit fly).